Here is a 344-residue protein sequence, read N- to C-terminus: Heat-inducible transcription repressor hrcA (344 aa).

Belongs to the HrcA family.

In terms of biological role, negative regulator of class I heat shock genes (grpE-dnaK-dnaJ and groELS operons). Prevents heat-shock induction of these operons. The polypeptide is Heat-inducible transcription repressor hrcA (Streptococcus pyogenes serotype M3 (strain ATCC BAA-595 / MGAS315)).